The chain runs to 521 residues: C-22 sterol desaturase erg5 (521 aa).

Residues A30–I50 traverse the membrane as a helical segment.

The protein belongs to the cytochrome P450 family. The cofactor is heme.

The protein resides in the endoplasmic reticulum membrane. The enzyme catalyses 5-dehydroepisterol + NADPH + O2 + H(+) = ergosta-5,7,22,24(28)-tetraen-3beta-ol + NADP(+) + 2 H2O. The protein operates within steroid metabolism; ergosterol biosynthesis. In terms of biological role, C-22 sterol desaturase; part of the third module of ergosterol biosynthesis pathway that includes the late steps of the pathway. Erg5 converts 5-dehydroepisterol into ergosta-5,7,22,24(28)-tetraen-3beta-ol by forming the C-22(23) double bond in the sterol side chain. The third module or late pathway involves the ergosterol synthesis itself through consecutive reactions that mainly occur in the endoplasmic reticulum (ER) membrane. Firstly, the squalene synthase erg9 catalyzes the condensation of 2 farnesyl pyrophosphate moieties to form squalene, which is the precursor of all steroids. Squalene synthase is crucial for balancing the incorporation of farnesyl diphosphate (FPP) into sterol and nonsterol isoprene synthesis. Secondly, squalene is converted into lanosterol by the consecutive action of the squalene epoxidase erg1 and the lanosterol synthase erg7. Then, the delta(24)-sterol C-methyltransferase erg6 methylates lanosterol at C-24 to produce eburicol. Eburicol is the substrate of the sterol 14-alpha demethylase encoded by cyp51A and cyp51B, to yield 4,4,24-trimethyl ergosta-8,14,24(28)-trienol. The C-14 reductase erg24 then reduces the C14=C15 double bond which leads to 4,4-dimethylfecosterol. A sequence of further demethylations at C-4, involving the C-4 demethylation complex containing the C-4 methylsterol oxidases erg25A or erg25B, the sterol-4-alpha-carboxylate 3-dehydrogenase erg26 and the 3-keto-steroid reductase erg27, leads to the production of fecosterol via 4-methylfecosterol. The C-8 sterol isomerase erg2 then catalyzes the reaction which results in unsaturation at C-7 in the B ring of sterols and thus converts fecosterol to episterol. The sterol-C5-desaturase erg3B then catalyzes the introduction of a C-5 double bond in the B ring to produce 5-dehydroepisterol. The 2 other sterol-C5-desaturases, erg3A and erg3C, seem to be less important in ergosterol biosynthesis. The C-22 sterol desaturase erg5 further converts 5-dehydroepisterol into ergosta-5,7,22,24(28)-tetraen-3beta-ol by forming the C-22(23) double bond in the sterol side chain. Finally, ergosta-5,7,22,24(28)-tetraen-3beta-ol is substrate of the C-24(28) sterol reductases erg4A and erg4B to produce ergosterol. Possible alternative sterol biosynthetic pathways might exist from fecosterol to ergosterol, depending on the activities of the erg3 isoforms. The protein is C-22 sterol desaturase erg5 of Aspergillus fumigatus (strain ATCC MYA-4609 / CBS 101355 / FGSC A1100 / Af293) (Neosartorya fumigata).